Reading from the N-terminus, the 267-residue chain is Orotidine 5'-phosphate decarboxylase (267 aa).

Substrate contacts are provided by residues aspartate 38, 60–62, 92–101, tyrosine 218, and arginine 236; these read KTH and DRKFADIGNT. Lysine 94 functions as the Proton donor in the catalytic mechanism.

It belongs to the OMP decarboxylase family.

The enzyme catalyses orotidine 5'-phosphate + H(+) = UMP + CO2. The protein operates within pyrimidine metabolism; UMP biosynthesis via de novo pathway; UMP from orotate: step 2/2. The sequence is that of Orotidine 5'-phosphate decarboxylase (URA3) from Debaryomyces hansenii (strain ATCC 36239 / CBS 767 / BCRC 21394 / JCM 1990 / NBRC 0083 / IGC 2968) (Yeast).